The chain runs to 463 residues: uncharacterized protein (463 aa).

In terms of domain architecture, HTH gntR-type spans 13–81 (IPLYQQLYRY…PRSGWFADYH (69 aa)). A DNA-binding region (H-T-H motif) is located at residues 41 to 60 (KRLLANQLSISQTTVERAYE). Residue lysine 308 is modified to N6-(pyridoxal phosphate)lysine.

The protein in the C-terminal section; belongs to the class-I pyridoxal-phosphate-dependent aminotransferase family. It depends on pyridoxal 5'-phosphate as a cofactor.

This is an uncharacterized protein from Bacillus subtilis (strain 168).